The primary structure comprises 122 residues: UPF0738 protein YjbL (122 aa).

It belongs to the UPF0738 family.

The chain is UPF0738 protein YjbL (yjbL) from Bacillus subtilis (strain 168).